A 474-amino-acid chain; its full sequence is Glutamate--tRNA ligase (474 aa).

A 'HIGH' region motif is present at residues 9-19; the sequence is PSPTGYLHVGG. The 'KMSKS' region signature appears at 240-244; the sequence is KLSKR. K243 is a binding site for ATP.

Belongs to the class-I aminoacyl-tRNA synthetase family. Glutamate--tRNA ligase type 1 subfamily. Monomer.

It is found in the cytoplasm. It catalyses the reaction tRNA(Glu) + L-glutamate + ATP = L-glutamyl-tRNA(Glu) + AMP + diphosphate. Its function is as follows. Catalyzes the attachment of glutamate to tRNA(Glu) in a two-step reaction: glutamate is first activated by ATP to form Glu-AMP and then transferred to the acceptor end of tRNA(Glu). The sequence is that of Glutamate--tRNA ligase from Vibrio parahaemolyticus serotype O3:K6 (strain RIMD 2210633).